The chain runs to 265 residues: Small ribosomal subunit protein uS3 (265 aa).

The KH type-2 domain occupies Val39–Arg107. The segment at Asn211–Glu265 is disordered. A compositionally biased stretch (basic and acidic residues) spans Glu221–Gly239.

Belongs to the universal ribosomal protein uS3 family. In terms of assembly, part of the 30S ribosomal subunit. Forms a tight complex with proteins S10 and S14.

In terms of biological role, binds the lower part of the 30S subunit head. Binds mRNA in the 70S ribosome, positioning it for translation. This Cupriavidus metallidurans (strain ATCC 43123 / DSM 2839 / NBRC 102507 / CH34) (Ralstonia metallidurans) protein is Small ribosomal subunit protein uS3.